Consider the following 277-residue polypeptide: MGTIESYLTNSYNYIIFNFKKLCIGGLMSAIVGAMSGVTTAFIDLFMERANYDIMHIIMSFLIYFGIIFIIGLIVSAIIGGYNVRIMKTTVEGLNVAPDWNNITDLLYRGILYIVGLVLLNIIFYFIPAILFVFGIFSLYISKIIGAFLIIISILIFIISVISLWLYSKLAEVNYSVKGFYGFFEFKEIFKMIGIRYIILVIIIAIINFIISLIVVLPLNIIDIFISYSALANSILTIIYISIKGISYALSTFVDFYLGVFSIRAVALYYKDRKGIT.

A run of 7 helical transmembrane segments spans residues Cys23 to Ile43, Phe61 to Gly81, Leu117 to Phe137, Ile144 to Leu164, Tyr197 to Leu217, Ile221 to Ile241, and Ile243 to Ile263.

This sequence to M.jannaschii MJ1189.

It localises to the cell membrane. This is an uncharacterized protein from Methanocaldococcus jannaschii (strain ATCC 43067 / DSM 2661 / JAL-1 / JCM 10045 / NBRC 100440) (Methanococcus jannaschii).